We begin with the raw amino-acid sequence, 307 residues long: 4-diphosphocytidyl-2-C-methyl-D-erythritol kinase (307 aa).

Residue Lys14 is part of the active site. 107-117 (PVAGGMAGGSA) serves as a coordination point for ATP. Asp149 is a catalytic residue.

Belongs to the GHMP kinase family. IspE subfamily.

It catalyses the reaction 4-CDP-2-C-methyl-D-erythritol + ATP = 4-CDP-2-C-methyl-D-erythritol 2-phosphate + ADP + H(+). It participates in isoprenoid biosynthesis; isopentenyl diphosphate biosynthesis via DXP pathway; isopentenyl diphosphate from 1-deoxy-D-xylulose 5-phosphate: step 3/6. In terms of biological role, catalyzes the phosphorylation of the position 2 hydroxy group of 4-diphosphocytidyl-2C-methyl-D-erythritol. The sequence is that of 4-diphosphocytidyl-2-C-methyl-D-erythritol kinase from Thermobifida fusca (strain YX).